We begin with the raw amino-acid sequence, 386 residues long: Zinc finger CCCH domain-containing protein 39 (386 aa).

The disordered stretch occupies residues 1–90; the sequence is MDSSYSDSRP…SSSNPWMVPS (90 aa). Positions 20–37 are enriched in polar residues; that stretch reads WNQTQMIDSMANPMNNEQ. The segment covering 43–58 has biased composition (low complexity); that stretch reads LSESQSQSQPSQQLQP. The span at 72 to 85 shows a compositional bias: polar residues; the sequence is NPASSFPQPSSSNP. A C3H1-type 1 zinc finger spans residues 104 to 131; it reads FYKTRMCAKFRAGTCRNGELCNFAHGIE. Positions 136–166 are disordered; the sequence is PPSNWQEIVGPPPAGQDRERERERERERERP. Basic and acidic residues predominate over residues 151–166; that stretch reads QDRERERERERERERP. C3H1-type zinc fingers lie at residues 183–211 and 269–297; these read ILRM…HEDL and YWKT…HGQA.

The polypeptide is Zinc finger CCCH domain-containing protein 39 (Arabidopsis thaliana (Mouse-ear cress)).